A 472-amino-acid polypeptide reads, in one-letter code: Pyruvate kinase (472 aa).

Arg-33 serves as a coordination point for substrate. K(+)-binding residues include Asn-35, Ser-37, and Asp-67. Asn-35–His-38 serves as a coordination point for ATP. Positions 74 and 155 each coordinate ATP. A Mg(2+)-binding site is contributed by Glu-220. Residues Gly-243, Asp-244, and Thr-276 each coordinate substrate. Residue Asp-244 coordinates Mg(2+).

It belongs to the pyruvate kinase family. In terms of assembly, homotetramer. Mg(2+) is required as a cofactor. It depends on K(+) as a cofactor.

It carries out the reaction pyruvate + ATP = phosphoenolpyruvate + ADP + H(+). The protein operates within carbohydrate degradation; glycolysis; pyruvate from D-glyceraldehyde 3-phosphate: step 5/5. The sequence is that of Pyruvate kinase (pyk) from Mycobacterium tuberculosis (strain CDC 1551 / Oshkosh).